Reading from the N-terminus, the 437-residue chain is GTPase Der (437 aa).

2 EngA-type G domains span residues 3-167 (NLVA…NKET) and 176-352 (PRFA…ENRT). Residues 9 to 16 (GRPNVGKS), 56 to 60 (DTGGW), 119 to 122 (NKTD), 182 to 189 (GRPNAGKS), 229 to 233 (DTAGI), and 294 to 297 (NKWD) contribute to the GTP site. In terms of domain architecture, KH-like spans 353-437 (TKIPTARLNE…TPINIYIRQK (85 aa)).

Belongs to the TRAFAC class TrmE-Era-EngA-EngB-Septin-like GTPase superfamily. EngA (Der) GTPase family. As to quaternary structure, associates with the 50S ribosomal subunit.

In terms of biological role, GTPase that plays an essential role in the late steps of ribosome biogenesis. The polypeptide is GTPase Der (Bacteroides thetaiotaomicron (strain ATCC 29148 / DSM 2079 / JCM 5827 / CCUG 10774 / NCTC 10582 / VPI-5482 / E50)).